We begin with the raw amino-acid sequence, 604 residues long: Glutamine--fructose-6-phosphate aminotransferase [isomerizing] (604 aa).

The active-site Nucleophile; for GATase activity is the cysteine 2. Residues cysteine 2–glutamine 219 enclose the Glutamine amidotransferase type-2 domain. 2 SIS domains span residues leucine 279–alanine 427 and leucine 454–proline 594. Lysine 599 functions as the For Fru-6P isomerization activity in the catalytic mechanism.

As to quaternary structure, homodimer.

The protein resides in the cytoplasm. It catalyses the reaction D-fructose 6-phosphate + L-glutamine = D-glucosamine 6-phosphate + L-glutamate. In terms of biological role, catalyzes the first step in hexosamine metabolism, converting fructose-6P into glucosamine-6P using glutamine as a nitrogen source. This chain is Glutamine--fructose-6-phosphate aminotransferase [isomerizing], found in Legionella pneumophila (strain Paris).